A 112-amino-acid chain; its full sequence is Peptidyl-tRNA hydrolase (112 aa).

Belongs to the PTH2 family.

It localises to the cytoplasm. It catalyses the reaction an N-acyl-L-alpha-aminoacyl-tRNA + H2O = an N-acyl-L-amino acid + a tRNA + H(+). Its function is as follows. The natural substrate for this enzyme may be peptidyl-tRNAs which drop off the ribosome during protein synthesis. This chain is Peptidyl-tRNA hydrolase, found in Methanothermobacter thermautotrophicus (strain ATCC 29096 / DSM 1053 / JCM 10044 / NBRC 100330 / Delta H) (Methanobacterium thermoautotrophicum).